Here is a 1090-residue protein sequence, read N- to C-terminus: RNA-directed RNA polymerase (1090 aa).

The RdRp catalytic domain maps to 506–678 (LSYGDVTRYL…ALASLTGCEI (173 aa)).

Belongs to the reoviridae RNA-directed RNA polymerase family. As to quaternary structure, interacts with VP3 (Potential). Interacts with VP2; this interaction activates VP1. Interacts with NSP5; this interaction is probably necessary for the formation of functional virus factories. Interacts with NSP2; this interaction is weak. It depends on Mg(2+) as a cofactor.

It localises to the virion. The catalysed reaction is RNA(n) + a ribonucleoside 5'-triphosphate = RNA(n+1) + diphosphate. Functionally, RNA-directed RNA polymerase that is involved in both transcription and genome replication. Together with VP3 capping enzyme, forms an enzyme complex positioned near the channels situated at each of the five-fold vertices of the core. Following infection, the outermost layer of the virus is lost, leaving a double-layered particle (DLP) made up of the core and VP6 shell. VP1 then catalyzes the transcription of fully conservative plus-strand genomic RNAs that are extruded through the DLP's channels into the cytoplasm where they function as mRNAs for translation of viral proteins. One copy of each of the viral (+)RNAs is also recruited during core assembly, together with newly synthesized polymerase complexes and VP2. The polymerase of these novo-formed particles catalyzes the synthesis of complementary minus-strands leading to dsDNA formation. To do so, the polymerase specifically recognizes conserved 3' sequence(s) in plus-strand RNA templates. Once dsRNA synthesis is complete, the polymerase switches to the transcriptional mode, thus providing secondary transcription. This is RNA-directed RNA polymerase from Rotavirus C (isolate RVC/Human/United Kingdom/Bristol/1989) (RV-C).